Reading from the N-terminus, the 291-residue chain is 4-diphosphocytidyl-2-C-methyl-D-erythritol kinase (291 aa).

Lys8 is a catalytic residue. 89 to 99 (PIGAGVGGGSS) lines the ATP pocket. Asp131 is an active-site residue.

Belongs to the GHMP kinase family. IspE subfamily.

It carries out the reaction 4-CDP-2-C-methyl-D-erythritol + ATP = 4-CDP-2-C-methyl-D-erythritol 2-phosphate + ADP + H(+). The protein operates within isoprenoid biosynthesis; isopentenyl diphosphate biosynthesis via DXP pathway; isopentenyl diphosphate from 1-deoxy-D-xylulose 5-phosphate: step 3/6. Functionally, catalyzes the phosphorylation of the position 2 hydroxy group of 4-diphosphocytidyl-2C-methyl-D-erythritol. The protein is 4-diphosphocytidyl-2-C-methyl-D-erythritol kinase of Chlamydia caviae (strain ATCC VR-813 / DSM 19441 / 03DC25 / GPIC) (Chlamydophila caviae).